Here is a 128-residue protein sequence, read N- to C-terminus: Protein 2B* (128 aa).

Disordered regions lie at residues 1–27 (PFMF…NPTA) and 92–128 (RDDN…RNSS). Polar residues predominate over residues 18–27 (SVINGSNPTA). Over residues 111-128 (IDGRRDYKPDKSVRRNSS) the composition is skewed to basic and acidic residues.

The protein belongs to the encephalomyocarditis virus protein 2B* family.

The chain is Protein 2B* from Aotus trivirgatus (Three-striped night monkey).